A 401-amino-acid polypeptide reads, in one-letter code: Argininosuccinate synthase (401 aa).

Residues alanine 9–serine 17 and alanine 35 contribute to the ATP site. Tyrosine 86 contributes to the L-citrulline binding site. Glycine 116 lines the ATP pocket. Threonine 118, asparagine 122, and aspartate 123 together coordinate L-aspartate. L-citrulline is bound at residue asparagine 122. Residues arginine 126, serine 175, serine 184, glutamate 261, and tyrosine 273 each contribute to the L-citrulline site.

The protein belongs to the argininosuccinate synthase family. Type 1 subfamily. Homotetramer.

The protein localises to the cytoplasm. It catalyses the reaction L-citrulline + L-aspartate + ATP = 2-(N(omega)-L-arginino)succinate + AMP + diphosphate + H(+). It participates in amino-acid biosynthesis; L-arginine biosynthesis; L-arginine from L-ornithine and carbamoyl phosphate: step 2/3. In Aquifex aeolicus (strain VF5), this protein is Argininosuccinate synthase.